The following is a 423-amino-acid chain: UPF0229 protein Pfl01_5140 (423 aa).

The interval 83–108 (TAGEHIARPPGGGGGRGPGKAGNSGE) is disordered. The span at 92 to 107 (PGGGGGRGPGKAGNSG) shows a compositional bias: gly residues.

This sequence belongs to the UPF0229 family.

The polypeptide is UPF0229 protein Pfl01_5140 (Pseudomonas fluorescens (strain Pf0-1)).